The primary structure comprises 369 residues: Succinyl-diaminopimelate desuccinylase (369 aa).

His-77 contacts Zn(2+). The active site involves Asp-79. Asp-103 contributes to the Zn(2+) binding site. Glu-136 serves as the catalytic Proton acceptor. 3 residues coordinate Zn(2+): Glu-137, Glu-165, and His-345.

The protein belongs to the peptidase M20A family. Zn(2+) is required as a cofactor. The cofactor is Co(2+).

The catalysed reaction is N-succinyl-(2S,6S)-2,6-diaminopimelate + H2O = (2S,6S)-2,6-diaminopimelate + succinate. It functions in the pathway amino-acid biosynthesis; L-lysine biosynthesis via DAP pathway; LL-2,6-diaminopimelate from (S)-tetrahydrodipicolinate (succinylase route): step 3/3. This is Succinyl-diaminopimelate desuccinylase (dapE) from Corynebacterium glutamicum (strain ATCC 13032 / DSM 20300 / JCM 1318 / BCRC 11384 / CCUG 27702 / LMG 3730 / NBRC 12168 / NCIMB 10025 / NRRL B-2784 / 534).